Reading from the N-terminus, the 476-residue chain is Protein DETOXIFICATION 4 (476 aa).

The next 12 helical transmembrane spans lie at 35 to 55, 66 to 86, 117 to 137, 154 to 174, 176 to 196, 208 to 228, 260 to 280, 289 to 309, 332 to 352, 370 to 390, 408 to 428, and 433 to 453; these read AVPMATVTIAQYLLPVISVMV, GVALATSFTNVSGFSIMFGLV, IPICVLISILWIYMEKLLISL, LIPTLFAHAIVLPLTRFLLAQ, LVLPLLYFALTTLLFHIAVCW, GAALAISVSFWFFAMTLSCYV, AAMLCLEWWLFELLILCSGLL, VLSICLTTATLHYVIPVGVAA, LAGLCLWLVESSFFSILLFAF, VADLSPLLCLSFVLDGFTAVL, VVAYYLVGAPVGIYLAFSCEL, and LWCGVVVGSAVQAIILAIVTA.

The protein belongs to the multi antimicrobial extrusion (MATE) (TC 2.A.66.1) family.

Its subcellular location is the membrane. This is Protein DETOXIFICATION 4 from Arabidopsis thaliana (Mouse-ear cress).